The primary structure comprises 132 residues: Large ribosomal subunit protein uL14 (132 aa).

Belongs to the universal ribosomal protein uL14 family. As to quaternary structure, part of the 50S ribosomal subunit. Forms a cluster with proteins L3 and L24e, part of which may contact the 16S rRNA in 2 intersubunit bridges.

In terms of biological role, binds to 23S rRNA. Forms part of two intersubunit bridges in the 70S ribosome. This is Large ribosomal subunit protein uL14 from Methanospirillum hungatei JF-1 (strain ATCC 27890 / DSM 864 / NBRC 100397 / JF-1).